Here is a 236-residue protein sequence, read N- to C-terminus: Phosphoribosylaminoimidazole-succinocarboxamide synthase (236 aa).

It belongs to the SAICAR synthetase family.

The catalysed reaction is 5-amino-1-(5-phospho-D-ribosyl)imidazole-4-carboxylate + L-aspartate + ATP = (2S)-2-[5-amino-1-(5-phospho-beta-D-ribosyl)imidazole-4-carboxamido]succinate + ADP + phosphate + 2 H(+). It functions in the pathway purine metabolism; IMP biosynthesis via de novo pathway; 5-amino-1-(5-phospho-D-ribosyl)imidazole-4-carboxamide from 5-amino-1-(5-phospho-D-ribosyl)imidazole-4-carboxylate: step 1/2. In Pseudomonas putida (strain ATCC 700007 / DSM 6899 / JCM 31910 / BCRC 17059 / LMG 24140 / F1), this protein is Phosphoribosylaminoimidazole-succinocarboxamide synthase.